Reading from the N-terminus, the 144-residue chain is MWLQNLLFLNTVVCSISAPTSSPSSVTRPWQHVDAMKEALSLLNNSSEITAVMNETVEVVSEMFDPEEPKCLQTHLKLYEQGLRGSLISLKEPLRMMANHYKQHCPLTPETPCETQTITFKNFKEKLKDFLFNNPFDCWGPDQK.

The signal sequence occupies residues 1–17 (MWLQNLLFLNTVVCSIS). Residues Ser-22 and Ser-24 are each glycosylated (O-linked (GalNAc...) serine). Residue Thr-27 is glycosylated (O-linked (GalNAc...) threonine). N-linked (GlcNAc...) asparagine glycans are attached at residues Asn-44, Asn-45, and Asn-54. 2 disulfide bridges follow: Cys-71/Cys-113 and Cys-105/Cys-138.

Belongs to the GM-CSF family. As to quaternary structure, monomer. The signaling GM-CSF receptor complex is a dodecamer of two head-to-head hexamers of two alpha, two beta, and two ligand subunits.

It is found in the secreted. Functionally, cytokine that stimulates the growth and differentiation of hematopoietic precursor cells from various lineages, including granulocytes, macrophages, eosinophils and erythrocytes. This chain is Granulocyte-macrophage colony-stimulating factor (CSF2), found in Felis catus (Cat).